The chain runs to 224 residues: MQTLARLFGQSPFAPLQAHLEMVVSCVEYMLPIFTALRDGRYEELLEMAKLVSDKEYQADCIKNDMRNHLPAGLFMPISRAGILEIISIQDSIADTAEDVAILLTIRRLNFYPSMETLFFRFLEKNLEAFELTMTLLHEFNQLLESSFGGRKADKARLLVGRVAKSEHESDVLQRELMQIFFSDDFIIPEKEFYLWLQVIRRTAGISDSSEKLAHRINMTLEEK.

The protein belongs to the UPF0111 family.

The protein is UPF0111 protein CPn_0681/CP_0066/CPj0681/CpB0708 of Chlamydia pneumoniae (Chlamydophila pneumoniae).